The sequence spans 193 residues: Acyl carrier protein phosphodiesterase (193 aa).

Belongs to the AcpH family.

It catalyses the reaction holo-[ACP] + H2O = apo-[ACP] + (R)-4'-phosphopantetheine + H(+). Functionally, converts holo-ACP to apo-ACP by hydrolytic cleavage of the phosphopantetheine prosthetic group from ACP. This Salmonella dublin (strain CT_02021853) protein is Acyl carrier protein phosphodiesterase.